The sequence spans 577 residues: Mitochondrial-processing peptidase subunit alpha (577 aa).

Residues 1 to 35 constitute a mitochondrion transit peptide; it reads MLNRFRPARLVAQSSRCLPLTRARAGPLPVNNART. The segment at 259-301 is disordered; the sequence is SDAPGLSRTGSETSVDSLVSESSEASSESSSSSSDSSESSGGL. Low complexity predominate over residues 269-301; the sequence is SETSVDSLVSESSEASSESSSSSSDSSESSGGL.

This sequence belongs to the peptidase M16 family. As to quaternary structure, heterodimer of mpp (alpha) and pep (beta) subunits, forming the mitochondrial processing protease (MPP) in which mpp is involved in substrate recognition and binding and pep is the catalytic subunit.

The protein resides in the mitochondrion matrix. Substrate recognition and binding subunit of the essential mitochondrial processing protease (MPP), which cleaves the mitochondrial sequence off newly imported precursors proteins. This chain is Mitochondrial-processing peptidase subunit alpha, found in Neurospora crassa (strain ATCC 24698 / 74-OR23-1A / CBS 708.71 / DSM 1257 / FGSC 987).